The primary structure comprises 132 residues: Large-conductance mechanosensitive channel (132 aa).

Helical transmembrane passes span 14-34 and 67-87; these read VIDL…VSSL and GNFI…FMFV.

The protein belongs to the MscL family. Homopentamer.

The protein resides in the cell membrane. In terms of biological role, channel that opens in response to stretch forces in the membrane lipid bilayer. May participate in the regulation of osmotic pressure changes within the cell. This chain is Large-conductance mechanosensitive channel, found in Bacillus cereus (strain AH820).